Here is a 487-residue protein sequence, read N- to C-terminus: WD-40 repeat-containing protein MSI5 (487 aa).

N-acetylmethionine is present on M1. The segment covering 1–12 (MESEAAATVQAT) has biased composition (low complexity). The interval 1-44 (MESEAAATVQATRPRRAPRTPVTAILTDKRRRKPKSNNESQLPF) is disordered. A Nuclear localization signal motif is present at residues 14-21 (PRRAPRTP). 6 WD repeats span residues 142-182 (IHPG…DRYA), 197-237 (GHQD…TMAG), 270-310 (GHKD…SPAM), 315-355 (AHDA…SNGV), 364-404 (GHRA…KKSE), and 419-466 (GHRD…YRPE). A disordered region spans residues 236 to 268 (AGSDSKSPGSSFKQTGEGSDKTGGPSVGPRGIY). The span at 237–252 (GSDSKSPGSSFKQTGE) shows a compositional bias: polar residues. Positions 288–303 (FCSVGDDSCLMLWDAR) match the DWD box motif.

It belongs to the WD repeat RBAP46/RBAP48/MSI1 family. As to quaternary structure, interacts with AHL16. Interacts with LHP1, PDP2, PDP3 and PDP6. Component of the PRC2 (polycomb repressive complex 2) complex which regulates histone methylation on histone H3K27.

It localises to the nucleus. Functionally, core histone-binding subunit that may target chromatin assembly factors, chromatin remodeling factors and histone deacetylases to their histone substrates in a manner that is regulated by nucleosomal DNA. Acts together with PDP1 and MSI4/FVE to regulate the function of the PRC2 complex on FLC. The chain is WD-40 repeat-containing protein MSI5 from Arabidopsis thaliana (Mouse-ear cress).